The chain runs to 325 residues: MKNFSLWCDFIENSFLDNEFLNLLSHEINGATSNPAIFKNAILNSPIYKDKILKLKGKKTKDIYEELAISDIQKAADKLAPLFYQKNDGFISIEIDPRLHDNTTLSLGEAKRLYSAIGKENVMIKIPATKASYEVMYELMKNGISVNATLIFSLEQSQKCFEALNAGLVEFRKNNIALKEQNTRTPQAVISIFVSRFDRLLNPKTKEQNRIGILNANLAYNNIYSKNEPNIRALFASTGVKGDNLPKDYYIKELLFENSVNTAPLDAIEAFKGKMDFKKPLMNFEIYTALNQIISQSEREKACNDLLSDGIEQFCIAFEDILKAL.

The active-site Schiff-base intermediate with substrate is K125.

It belongs to the transaldolase family. Type 2 subfamily.

The protein localises to the cytoplasm. It catalyses the reaction D-sedoheptulose 7-phosphate + D-glyceraldehyde 3-phosphate = D-erythrose 4-phosphate + beta-D-fructose 6-phosphate. Its pathway is carbohydrate degradation; pentose phosphate pathway; D-glyceraldehyde 3-phosphate and beta-D-fructose 6-phosphate from D-ribose 5-phosphate and D-xylulose 5-phosphate (non-oxidative stage): step 2/3. Functionally, transaldolase is important for the balance of metabolites in the pentose-phosphate pathway. This is Transaldolase from Campylobacter jejuni subsp. doylei (strain ATCC BAA-1458 / RM4099 / 269.97).